The chain runs to 610 residues: UvrABC system protein C (610 aa).

The GIY-YIG domain maps to 16–94; it reads SQPGVYRMYD…IKLYQPRYNV (79 aa). In terms of domain architecture, UVR spans 204–239; it reads QQVLTRLIERMEQASQQLKFEDAARYRDQIQAVRQV.

It belongs to the UvrC family. In terms of assembly, interacts with UvrB in an incision complex.

It localises to the cytoplasm. Functionally, the UvrABC repair system catalyzes the recognition and processing of DNA lesions. UvrC both incises the 5' and 3' sides of the lesion. The N-terminal half is responsible for the 3' incision and the C-terminal half is responsible for the 5' incision. This Photorhabdus laumondii subsp. laumondii (strain DSM 15139 / CIP 105565 / TT01) (Photorhabdus luminescens subsp. laumondii) protein is UvrABC system protein C.